A 150-amino-acid chain; its full sequence is U1 small nuclear ribonucleoprotein C (150 aa).

The Matrin-type zinc-finger motif lies at 4 to 36 (YYCDYCKSYLTHDTMSVRKSHLQGRNHIKFYCD). Residues 66–127 (SDAKKSNGSS…PPNLSGLPLP (62 aa)) are disordered. Residues 80-92 (DIDKKENSSDHNK) are compositionally biased toward basic and acidic residues. Over residues 103–112 (NDNDDDDDEM) the composition is skewed to acidic residues.

Belongs to the U1 small nuclear ribonucleoprotein C family. As to quaternary structure, U1 snRNP is composed of the 7 core Sm proteins B/B', D1, D2, D3, E, F and G that assemble in a heptameric protein ring on the Sm site of the small nuclear RNA to form the core snRNP, and at least 3 U1 snRNP-specific proteins U1-70K, U1-A and U1-C. U1-C interacts with U1 snRNA and the 5' splice-site region of the pre-mRNA.

It localises to the nucleus. In terms of biological role, component of the spliceosomal U1 snRNP, which is essential for recognition of the pre-mRNA 5' splice-site and the subsequent assembly of the spliceosome. U1-C is directly involved in initial 5' splice-site recognition for both constitutive and regulated alternative splicing. The interaction with the 5' splice-site seems to precede base-pairing between the pre-mRNA and the U1 snRNA. Stimulates commitment or early (E) complex formation by stabilizing the base pairing of the 5' end of the U1 snRNA and the 5' splice-site region. The sequence is that of U1 small nuclear ribonucleoprotein C from Candida albicans (strain WO-1) (Yeast).